Reading from the N-terminus, the 321-residue chain is Putative ribose-phosphate pyrophosphokinase 2 (321 aa).

ATP is bound by residues 43–45 and 102–103; these read DGE and RQ. Mg(2+)-binding residues include His136 and Asp176. Asp225 contacts D-ribose 5-phosphate.

Belongs to the ribose-phosphate pyrophosphokinase family. Class I subfamily. Homohexamer. It depends on Mg(2+) as a cofactor.

It is found in the cytoplasm. The enzyme catalyses D-ribose 5-phosphate + ATP = 5-phospho-alpha-D-ribose 1-diphosphate + AMP + H(+). Its pathway is metabolic intermediate biosynthesis; 5-phospho-alpha-D-ribose 1-diphosphate biosynthesis; 5-phospho-alpha-D-ribose 1-diphosphate from D-ribose 5-phosphate (route I): step 1/1. In terms of biological role, involved in the biosynthesis of the central metabolite phospho-alpha-D-ribosyl-1-pyrophosphate (PRPP) via the transfer of pyrophosphoryl group from ATP to 1-hydroxyl of ribose-5-phosphate (Rib-5-P). The polypeptide is Putative ribose-phosphate pyrophosphokinase 2 (Lactiplantibacillus plantarum (strain ATCC BAA-793 / NCIMB 8826 / WCFS1) (Lactobacillus plantarum)).